The following is a 283-amino-acid chain: Bifunctional protein FolD (283 aa).

NADP(+) is bound by residues 164-166, Ser189, and Ile230; that span reads GRS.

The protein belongs to the tetrahydrofolate dehydrogenase/cyclohydrolase family. In terms of assembly, homodimer.

It carries out the reaction (6R)-5,10-methylene-5,6,7,8-tetrahydrofolate + NADP(+) = (6R)-5,10-methenyltetrahydrofolate + NADPH. It catalyses the reaction (6R)-5,10-methenyltetrahydrofolate + H2O = (6R)-10-formyltetrahydrofolate + H(+). The protein operates within one-carbon metabolism; tetrahydrofolate interconversion. Functionally, catalyzes the oxidation of 5,10-methylenetetrahydrofolate to 5,10-methenyltetrahydrofolate and then the hydrolysis of 5,10-methenyltetrahydrofolate to 10-formyltetrahydrofolate. The protein is Bifunctional protein FolD of Lacticaseibacillus paracasei (strain ATCC 334 / BCRC 17002 / CCUG 31169 / CIP 107868 / KCTC 3260 / NRRL B-441) (Lactobacillus paracasei).